We begin with the raw amino-acid sequence, 594 residues long: Kelch domain-containing protein 7B (594 aa).

A disordered region spans residues 1–174; that stretch reads MVLRSHPFPR…PAGRSGALTE (174 aa). The span at 49–58 shows a compositional bias: gly residues; sequence IGTGTGGLVE. Residues 64–74 are compositionally biased toward polar residues; it reads QPRSSETNGSP. Positions 104 to 115 are enriched in pro residues; sequence PAQPPAQRPPGP. Low complexity predominate over residues 116–126; sequence AASSSARRSQP. 5 Kelch repeats span residues 306 to 354, 355 to 405, 406 to 448, 451 to 493, and 495 to 538; these read EEPP…TMHN, YLFL…ALDG, LLYA…AVAC, DIYV…ALGG, and LYRF…TTLG.

This chain is Kelch domain-containing protein 7B (KLHDC7B), found in Homo sapiens (Human).